A 215-amino-acid polypeptide reads, in one-letter code: Probable transaldolase (215 aa).

K83 acts as the Schiff-base intermediate with substrate in catalysis.

This sequence belongs to the transaldolase family. Type 3B subfamily.

The protein localises to the cytoplasm. The enzyme catalyses D-sedoheptulose 7-phosphate + D-glyceraldehyde 3-phosphate = D-erythrose 4-phosphate + beta-D-fructose 6-phosphate. The protein operates within carbohydrate degradation; pentose phosphate pathway; D-glyceraldehyde 3-phosphate and beta-D-fructose 6-phosphate from D-ribose 5-phosphate and D-xylulose 5-phosphate (non-oxidative stage): step 2/3. Its function is as follows. Transaldolase is important for the balance of metabolites in the pentose-phosphate pathway. This Clostridium perfringens (strain ATCC 13124 / DSM 756 / JCM 1290 / NCIMB 6125 / NCTC 8237 / Type A) protein is Probable transaldolase.